The sequence spans 236 residues: 2,3,4,5-tetrahydropyridine-2,6-dicarboxylate N-acetyltransferase (236 aa).

It belongs to the transferase hexapeptide repeat family. DapH subfamily.

The enzyme catalyses (S)-2,3,4,5-tetrahydrodipicolinate + acetyl-CoA + H2O = L-2-acetamido-6-oxoheptanedioate + CoA. Its pathway is amino-acid biosynthesis; L-lysine biosynthesis via DAP pathway; LL-2,6-diaminopimelate from (S)-tetrahydrodipicolinate (acetylase route): step 1/3. Catalyzes the transfer of an acetyl group from acetyl-CoA to tetrahydrodipicolinate. The protein is 2,3,4,5-tetrahydropyridine-2,6-dicarboxylate N-acetyltransferase of Lactobacillus helveticus (strain DPC 4571).